We begin with the raw amino-acid sequence, 530 residues long: uncharacterized protein (530 aa).

2 stretches are compositionally biased toward polar residues: residues 60–74 (LNES…SSTP) and 92–103 (GQGTSRPLPTLS). Disordered regions lie at residues 60–103 (LNES…PTLS) and 121–155 (ASST…GLGN). A compositionally biased stretch (basic and acidic residues) spans 131–142 (PDPRDAPREGSF).

This is an uncharacterized protein from Mus musculus (Mouse).